Reading from the N-terminus, the 277-residue chain is Shikimate dehydrogenase (NADP(+)) (277 aa).

Residues 18-20 (SKS) and threonine 65 contribute to the shikimate site. Catalysis depends on lysine 69, which acts as the Proton acceptor. Glutamate 81 is an NADP(+) binding site. The shikimate site is built by asparagine 90 and aspartate 106. NADP(+) contacts are provided by residues 130–134 (GAGGA), 154–159 (NRTFSK), and methionine 217. Tyrosine 219 contributes to the shikimate binding site. Glycine 241 is a binding site for NADP(+).

Belongs to the shikimate dehydrogenase family. Homodimer.

It carries out the reaction shikimate + NADP(+) = 3-dehydroshikimate + NADPH + H(+). It functions in the pathway metabolic intermediate biosynthesis; chorismate biosynthesis; chorismate from D-erythrose 4-phosphate and phosphoenolpyruvate: step 4/7. In terms of biological role, involved in the biosynthesis of the chorismate, which leads to the biosynthesis of aromatic amino acids. Catalyzes the reversible NADPH linked reduction of 3-dehydroshikimate (DHSA) to yield shikimate (SA). This is Shikimate dehydrogenase (NADP(+)) from Vibrio campbellii (strain ATCC BAA-1116).